The following is a 462-amino-acid chain: Argininosuccinate lyase (462 aa).

This sequence belongs to the lyase 1 family. Argininosuccinate lyase subfamily.

It is found in the cytoplasm. The enzyme catalyses 2-(N(omega)-L-arginino)succinate = fumarate + L-arginine. It functions in the pathway amino-acid biosynthesis; L-arginine biosynthesis; L-arginine from L-ornithine and carbamoyl phosphate: step 3/3. The protein is Argininosuccinate lyase of Methylobacterium sp. (strain 4-46).